The sequence spans 318 residues: D-alanine--D-alanine ligase (318 aa).

Residues 101–307 (KKIIQYEGLP…FPDLIEKLVE (207 aa)) enclose the ATP-grasp domain. Position 135-190 (135-190 (CREMGLPLVVKAPTQGSTIGMSFVHKEEDMAGALELAYDYDPVALVEQFIRGTEVT)) interacts with ATP. Residues aspartate 261, glutamate 274, and asparagine 276 each contribute to the Mg(2+) site.

This sequence belongs to the D-alanine--D-alanine ligase family. The cofactor is Mg(2+). Mn(2+) serves as cofactor.

The protein resides in the cytoplasm. It catalyses the reaction 2 D-alanine + ATP = D-alanyl-D-alanine + ADP + phosphate + H(+). The protein operates within cell wall biogenesis; peptidoglycan biosynthesis. In terms of biological role, cell wall formation. This Pelotomaculum thermopropionicum (strain DSM 13744 / JCM 10971 / SI) protein is D-alanine--D-alanine ligase.